The sequence spans 224 residues: Synaptogyrin-2 (224 aa).

Position 1 is an N-acetylmethionine (Met1). Ser3 carries the post-translational modification Phosphoserine. The MARVEL domain maps to 20–171 (FLKQPQVVVR…LAFLAYQRYK (152 aa)). 4 helical membrane passes run 26-46 (VVVR…IFGE), 73-93 (AIGV…IYFP), 105-125 (VIGD…GFCF), and 147-167 (AAIT…FLAY). Residues 196-224 (PGVPADTYQQPPFTQNAESTEGYQPPPVY) form a disordered region. Over residues 202-217 (TYQQPPFTQNAESTEG) the composition is skewed to polar residues.

It belongs to the synaptogyrin family. May be tyrosine phosphorylated by Src.

The protein localises to the cytoplasmic vesicle membrane. The protein resides in the cytoplasmic vesicle. It is found in the secretory vesicle. It localises to the synaptic vesicle membrane. In terms of biological role, may play a role in regulated exocytosis. In neuronal cells, modulates the localization of synaptophysin/SYP into synaptic-like microvesicles and may therefore play a role in the formation and/or the maturation of this vesicles. May also play a role in GLUT4 storage and transport to the plasma membrane. The sequence is that of Synaptogyrin-2 from Bos taurus (Bovine).